Consider the following 183-residue polypeptide: Adenylate kinase (183 aa).

12 to 17 (GAGKGT) contributes to the ATP binding site. The NMP stretch occupies residues 32-61 (STGDLLRAEVSAGSALGQEAESVMNRGELV). AMP is bound by residues threonine 33, arginine 38, 59-61 (ELV), 86-89 (GFPR), and glutamine 93. The segment at 127 to 133 (SRGRDDD) is LID. Arginine 128 lines the ATP pocket. AMP contacts are provided by arginine 130 and arginine 141. Glycine 169 contacts ATP.

This sequence belongs to the adenylate kinase family. Monomer.

The protein resides in the cytoplasm. It carries out the reaction AMP + ATP = 2 ADP. It functions in the pathway purine metabolism; AMP biosynthesis via salvage pathway; AMP from ADP: step 1/1. Catalyzes the reversible transfer of the terminal phosphate group between ATP and AMP. Plays an important role in cellular energy homeostasis and in adenine nucleotide metabolism. The chain is Adenylate kinase from Synechococcus sp. (strain CC9311).